We begin with the raw amino-acid sequence, 244 residues long: Phosphoadenosine 5'-phosphosulfate reductase (244 aa).

Catalysis depends on C239, which acts as the Nucleophile; cysteine thiosulfonate intermediate.

This sequence belongs to the PAPS reductase family. CysH subfamily.

It localises to the cytoplasm. It carries out the reaction [thioredoxin]-disulfide + sulfite + adenosine 3',5'-bisphosphate + 2 H(+) = [thioredoxin]-dithiol + 3'-phosphoadenylyl sulfate. Its pathway is sulfur metabolism; hydrogen sulfide biosynthesis; sulfite from sulfate: step 3/3. Catalyzes the formation of sulfite from phosphoadenosine 5'-phosphosulfate (PAPS) using thioredoxin as an electron donor. The protein is Phosphoadenosine 5'-phosphosulfate reductase of Escherichia coli O6:K15:H31 (strain 536 / UPEC).